Reading from the N-terminus, the 435-residue chain is 3-ketoacyl-CoA thiolase (435 aa).

The active-site Acyl-thioester intermediate is the Cys98. Residues His391 and Cys421 each act as proton acceptor in the active site.

This sequence belongs to the thiolase-like superfamily. Thiolase family. In terms of assembly, heterotetramer of two alpha chains (FadJ) and two beta chains (FadI).

It is found in the cytoplasm. The enzyme catalyses an acyl-CoA + acetyl-CoA = a 3-oxoacyl-CoA + CoA. It functions in the pathway lipid metabolism; fatty acid beta-oxidation. Catalyzes the final step of fatty acid oxidation in which acetyl-CoA is released and the CoA ester of a fatty acid two carbons shorter is formed. The chain is 3-ketoacyl-CoA thiolase from Vibrio vulnificus (strain YJ016).